The following is a 477-amino-acid chain: Protoporphyrinogen oxidase (477 aa).

FAD contacts are provided by residues 9–14, W42, 57–60, V257, A449, and 454–456; these read GGGISG, GPRG, and VAV.

This sequence belongs to the protoporphyrinogen/coproporphyrinogen oxidase family. Protoporphyrinogen oxidase subfamily. Monomer. Homodimer. Requires FAD as cofactor. Detected in liver (at protein level).

It localises to the mitochondrion inner membrane. It catalyses the reaction protoporphyrinogen IX + 3 O2 = protoporphyrin IX + 3 H2O2. Its pathway is porphyrin-containing compound metabolism; protoporphyrin-IX biosynthesis; protoporphyrin-IX from protoporphyrinogen-IX: step 1/1. In terms of biological role, catalyzes the 6-electron oxidation of protoporphyrinogen-IX to form protoporphyrin-IX. This is Protoporphyrinogen oxidase (PPOX) from Bos taurus (Bovine).